A 168-amino-acid chain; its full sequence is Ribosome maturation factor RimM (168 aa).

Residues 95–168 form the PRC barrel domain; it reads KEGDYYWTDL…IIVVEWDADF (74 aa).

The protein belongs to the RimM family. As to quaternary structure, binds ribosomal protein uS19.

It is found in the cytoplasm. In terms of biological role, an accessory protein needed during the final step in the assembly of 30S ribosomal subunit, possibly for assembly of the head region. Essential for efficient processing of 16S rRNA. May be needed both before and after RbfA during the maturation of 16S rRNA. It has affinity for free ribosomal 30S subunits but not for 70S ribosomes. The polypeptide is Ribosome maturation factor RimM (Coxiella burnetii (strain CbuK_Q154) (Coxiella burnetii (strain Q154))).